The primary structure comprises 248 residues: Ubiquinone/menaquinone biosynthesis C-methyltransferase UbiE (248 aa).

S-adenosyl-L-methionine-binding positions include Ser-68, Asp-92, and 120–121; that span reads NA.

The protein belongs to the class I-like SAM-binding methyltransferase superfamily. MenG/UbiE family.

It catalyses the reaction a 2-demethylmenaquinol + S-adenosyl-L-methionine = a menaquinol + S-adenosyl-L-homocysteine + H(+). It carries out the reaction a 2-methoxy-6-(all-trans-polyprenyl)benzene-1,4-diol + S-adenosyl-L-methionine = a 5-methoxy-2-methyl-3-(all-trans-polyprenyl)benzene-1,4-diol + S-adenosyl-L-homocysteine + H(+). Its pathway is quinol/quinone metabolism; menaquinone biosynthesis; menaquinol from 1,4-dihydroxy-2-naphthoate: step 2/2. The protein operates within cofactor biosynthesis; ubiquinone biosynthesis. Methyltransferase required for the conversion of demethylmenaquinol (DMKH2) to menaquinol (MKH2) and the conversion of 2-polyprenyl-6-methoxy-1,4-benzoquinol (DDMQH2) to 2-polyprenyl-3-methyl-6-methoxy-1,4-benzoquinol (DMQH2). In Rickettsia typhi (strain ATCC VR-144 / Wilmington), this protein is Ubiquinone/menaquinone biosynthesis C-methyltransferase UbiE.